The primary structure comprises 229 residues: AA9 family lytic polysaccharide monooxygenase E (229 aa).

A signal peptide spans 1-19 (MRSSDITFVLLSVVATVRS). H20 contacts Cu(2+). C57 and C178 are oxidised to a cystine. N76 carries N-linked (GlcNAc...) asparagine glycosylation. A Cu(2+)-binding site is contributed by H99. O2 is bound by residues H164 and Q173. Cu(2+) is bound at residue Y175. N217 carries an N-linked (GlcNAc...) asparagine glycan.

Belongs to the polysaccharide monooxygenase AA9 family. Requires Cu(2+) as cofactor.

Its subcellular location is the secreted. The catalysed reaction is [(1-&gt;4)-beta-D-glucosyl]n+m + reduced acceptor + O2 = 4-dehydro-beta-D-glucosyl-[(1-&gt;4)-beta-D-glucosyl]n-1 + [(1-&gt;4)-beta-D-glucosyl]m + acceptor + H2O.. Lytic polysaccharide monooxygenase (LPMO) that depolymerizes crystalline and amorphous polysaccharides via the oxidation of scissile alpha- or beta-(1-4)-glycosidic bonds, yielding C1 and C4 oxidation products. Catalysis by LPMOs requires the reduction of the active-site copper from Cu(II) to Cu(I) by a reducing agent and H(2)O(2) or O(2) as a cosubstrate. The protein is AA9 family lytic polysaccharide monooxygenase E of Botryotinia fuckeliana (strain B05.10) (Noble rot fungus).